The following is a 159-amino-acid chain: Cytochrome c-type biogenesis protein CcmE (159 aa).

The Cytoplasmic portion of the chain corresponds to 1 to 7 (MTPRQRR). A helical; Signal-anchor for type II membrane protein transmembrane segment spans residues 8–28 (LGMLLAALACAGIALALVLNA). At 29–159 (FRSNLVFFFS…LAEGERETQR (131 aa)) the chain is on the periplasmic side. Residues histidine 123 and tyrosine 127 each coordinate heme.

This sequence belongs to the CcmE/CycJ family.

The protein localises to the cell inner membrane. In terms of biological role, heme chaperone required for the biogenesis of c-type cytochromes. Transiently binds heme delivered by CcmC and transfers the heme to apo-cytochromes in a process facilitated by CcmF and CcmH. This Cupriavidus pinatubonensis (strain JMP 134 / LMG 1197) (Cupriavidus necator (strain JMP 134)) protein is Cytochrome c-type biogenesis protein CcmE.